A 309-amino-acid chain; its full sequence is Small ribosomal subunit protein uS7m (309 aa).

A disordered region spans residues 39–86; sequence DSTTSSRLPPRVQIQQQQQQRTQPYSTETTPPPNSNNGDLAGIEGQPP. Residues 51-61 are compositionally biased toward low complexity; that stretch reads QIQQQQQQRTQ.

It belongs to the universal ribosomal protein uS7 family. As to quaternary structure, component of the mitochondrial small ribosomal subunit (mt-SSU). Mature N.crassa 74S mitochondrial ribosomes consist of a small (37S) and a large (54S) subunit. The 37S small subunit contains a 16S ribosomal RNA (16S mt-rRNA) and 32 different proteins. The 54S large subunit contains a 23S rRNA (23S mt-rRNA) and 42 different proteins.

It localises to the mitochondrion. In terms of biological role, component of the mitochondrial ribosome (mitoribosome), a dedicated translation machinery responsible for the synthesis of mitochondrial genome-encoded proteins, including at least some of the essential transmembrane subunits of the mitochondrial respiratory chain. The mitoribosomes are attached to the mitochondrial inner membrane and translation products are cotranslationally integrated into the membrane. The protein is Small ribosomal subunit protein uS7m (rsm7) of Neurospora crassa (strain ATCC 24698 / 74-OR23-1A / CBS 708.71 / DSM 1257 / FGSC 987).